Consider the following 315-residue polypeptide: Biotin synthase (315 aa).

A Radical SAM core domain is found at 39–266; sequence NSLQFATLLS…KSAIRLTAGR (228 aa). [4Fe-4S] cluster-binding residues include Cys-54, Cys-58, and Cys-61. Residues Cys-98, Cys-129, Cys-189, and Arg-261 each coordinate [2Fe-2S] cluster.

The protein belongs to the radical SAM superfamily. Biotin synthase family. Homodimer. Requires [4Fe-4S] cluster as cofactor. [2Fe-2S] cluster serves as cofactor.

It catalyses the reaction (4R,5S)-dethiobiotin + (sulfur carrier)-SH + 2 reduced [2Fe-2S]-[ferredoxin] + 2 S-adenosyl-L-methionine = (sulfur carrier)-H + biotin + 2 5'-deoxyadenosine + 2 L-methionine + 2 oxidized [2Fe-2S]-[ferredoxin]. It functions in the pathway cofactor biosynthesis; biotin biosynthesis; biotin from 7,8-diaminononanoate: step 2/2. Its function is as follows. Catalyzes the conversion of dethiobiotin (DTB) to biotin by the insertion of a sulfur atom into dethiobiotin via a radical-based mechanism. The protein is Biotin synthase of Legionella pneumophila (strain Paris).